The chain runs to 327 residues: Metapyrocatechase (327 aa).

VOC domains lie at 14–126 (QLAH…IFFE) and 156–276 (RLDH…LFGD). Fe cation contacts are provided by His-159, His-221, and Glu-272.

The protein belongs to the extradiol ring-cleavage dioxygenase family. Fe(2+) is required as a cofactor.

The catalysed reaction is catechol + O2 = (2Z,4E)-2-hydroxy-6-oxohexa-2,4-dienoate + H(+). The protein is Metapyrocatechase (pheB) of Geobacillus stearothermophilus (Bacillus stearothermophilus).